The primary structure comprises 389 residues: Alkanesulfonate monooxygenase (389 aa).

The protein belongs to the SsuD family.

The enzyme catalyses an alkanesulfonate + FMNH2 + O2 = an aldehyde + FMN + sulfite + H2O + 2 H(+). Its function is as follows. Catalyzes the desulfonation of aliphatic sulfonates. The chain is Alkanesulfonate monooxygenase from Agrobacterium fabrum (strain C58 / ATCC 33970) (Agrobacterium tumefaciens (strain C58)).